We begin with the raw amino-acid sequence, 258 residues long: Protein CHAPERONE-LIKE PROTEIN OF POR1, chloroplastic (258 aa).

Residues 1-48 (MSSSLLLSGSTVSSSFIAPSKPSLVRNSSKTSLLPFRNVSRSFKTVKC) constitute a chloroplast transit peptide. Thr-49 is modified (N-acetylthreonine). Residues 67-122 (WDPYKRLGVSPYASEEEIWASRNFLLQQYAGHERSEESIEGAFEKLLMSSFIRRKK) form a J-like domain required for holdase chaperone activity region. Helical transmembrane passes span 162–182 (FLFA…GPAF), 207–227 (LIGI…IPMI), and 237–257 (TLEL…CTFL).

This sequence belongs to the chaperone-like protein of POR1 protein family. Interacts with PORB in chloroplast. Interacts with PORA during plastid import. In terms of tissue distribution, expressed ubiquitously with higher levels in young leaves, flowers, and the root elongation zone.

It localises to the mitochondrion membrane. Its subcellular location is the plastid. It is found in the chloroplast envelope. The protein localises to the chloroplast thylakoid membrane. Functionally, essential protein required during embryogenesis. Exhibits holdase chaperone activity involved in the stabilization of NADPH:protochlorophyllide oxidoreductase (POR) proteins against photooxidative stress during POR proteins import into chloroplasts. Required for chloroplast biogenesis and development. When expressed in yeast, triggers mitochondria-mediated cell death associated with the loss of mitochondrial membrane potential. The protein is Protein CHAPERONE-LIKE PROTEIN OF POR1, chloroplastic of Arabidopsis thaliana (Mouse-ear cress).